We begin with the raw amino-acid sequence, 125 residues long: Calcitonin receptor-stimulating peptide 1 (125 aa).

Positions 1–25 (MGFWKFPPFLVLSILVLYQAGMFHA) are cleaved as a signal peptide. A propeptide spanning residues 26–77 (APFRSVFDGRFDPATLDEEESRLLLAAMVNDYEQMRTRESEKAQKTEGSRIQ) is cleaved from the precursor. A disulfide bridge links cysteine 81 with cysteine 86.

The protein belongs to the calcitonin family.

The protein localises to the secreted. Its function is as follows. Stimulates cAMP production via the calcitonin receptor (CT) but not via the CT-like (CL) receptor. The protein is Calcitonin receptor-stimulating peptide 1 (CRSP1) of Ovis aries (Sheep).